The sequence spans 389 residues: Rhizopuspepsin-1 (389 aa).

The signal sequence occupies residues 1-21 (MKFTLISSCVALAAMTLAVEA). Positions 22-66 (APNGKKINIPLAKNNSYKPSAKNALNKALAKYNRRKVGSGGITTE) are cleaved as a propeptide — activation peptide. In terms of domain architecture, Peptidase A1 spans 82–385 (YYGEVTVGTP…NQEVPEVQIA (304 aa)). The active site involves Asp100. Cys113 and Cys116 are joined by a disulfide. Asp283 is an active-site residue. Cys317 and Cys350 are oxidised to a cystine.

The protein belongs to the peptidase A1 family.

It carries out the reaction Hydrolysis of proteins with broad specificity similar to that of pepsin A, preferring hydrophobic residues at P1 and P1'. Clots milk and activates trypsinogen. Does not cleave 4-Gln-|-His-5, but does cleave 10-His-|-Leu-11 and 12-Val-|-Glu-13 in B chain of insulin.. The sequence is that of Rhizopuspepsin-1 (RNAP) from Rhizopus niveus.